Here is a 191-residue protein sequence, read N- to C-terminus: UPF0398 protein LSEI_1479 (191 aa).

It belongs to the UPF0398 family.

The polypeptide is UPF0398 protein LSEI_1479 (Lacticaseibacillus paracasei (strain ATCC 334 / BCRC 17002 / CCUG 31169 / CIP 107868 / KCTC 3260 / NRRL B-441) (Lactobacillus paracasei)).